Here is a 215-residue protein sequence, read N- to C-terminus: Vesicle-trafficking protein SEC22b (215 aa).

The Cytoplasmic portion of the chain corresponds to 1–190; that stretch reads MVLLTMIARV…RQDAKYLNMR (190 aa). Residues 6 to 119 enclose the Longin domain; it reads MIARVADGLP…YSFIEFDNYI (114 aa). The region spanning 134 to 194 is the v-SNARE coiled-coil homology domain; the sequence is NLSSVNTELQ…KYLNMRSTYA (61 aa). The helical transmembrane segment at 191-213 threads the bilayer; that stretch reads STYAKLAAVAVFSVMLIVYIRFW. The Lumenal portion of the chain corresponds to 214 to 215; that stretch reads WL.

It belongs to the synaptobrevin family. As to quaternary structure, component of 2 distinct SNARE complexes.

It localises to the endoplasmic reticulum membrane. The protein resides in the endoplasmic reticulum-Golgi intermediate compartment membrane. The protein localises to the golgi apparatus. Its subcellular location is the cis-Golgi network membrane. It is found in the trans-Golgi network membrane. It localises to the melanosome. SNARE involved in targeting and fusion of ER-derived transport vesicles with the Golgi complex as well as Golgi-derived retrograde transport vesicles with the ER. The protein is Vesicle-trafficking protein SEC22b of Xenopus tropicalis (Western clawed frog).